The sequence spans 264 residues: Thymidylate synthase (264 aa).

Arg21 lines the dUMP pocket. Residue His51 coordinates (6R)-5,10-methylene-5,6,7,8-tetrahydrofolate. 126-127 is a dUMP binding site; the sequence is RR. Cys146 serves as the catalytic Nucleophile. Residues 166 to 169, Asn177, and 207 to 209 each bind dUMP; these read RSCD and HLY. Asp169 serves as a coordination point for (6R)-5,10-methylene-5,6,7,8-tetrahydrofolate. A (6R)-5,10-methylene-5,6,7,8-tetrahydrofolate-binding site is contributed by Ala263.

This sequence belongs to the thymidylate synthase family. Bacterial-type ThyA subfamily. As to quaternary structure, homodimer.

Its subcellular location is the cytoplasm. It catalyses the reaction dUMP + (6R)-5,10-methylene-5,6,7,8-tetrahydrofolate = 7,8-dihydrofolate + dTMP. Its pathway is pyrimidine metabolism; dTTP biosynthesis. In terms of biological role, catalyzes the reductive methylation of 2'-deoxyuridine-5'-monophosphate (dUMP) to 2'-deoxythymidine-5'-monophosphate (dTMP) while utilizing 5,10-methylenetetrahydrofolate (mTHF) as the methyl donor and reductant in the reaction, yielding dihydrofolate (DHF) as a by-product. This enzymatic reaction provides an intracellular de novo source of dTMP, an essential precursor for DNA biosynthesis. The protein is Thymidylate synthase of Salmonella paratyphi C (strain RKS4594).